Consider the following 38-residue polypeptide: Photosystem II reaction center protein L (38 aa).

The chain crosses the membrane as a helical span at residues 17-37 (SLFWGLLLIFVLAVLFSSYFF).

Belongs to the PsbL family. In terms of assembly, PSII is composed of 1 copy each of membrane proteins PsbA, PsbB, PsbC, PsbD, PsbE, PsbF, PsbH, PsbI, PsbJ, PsbK, PsbL, PsbM, PsbT, PsbX, PsbY, PsbZ, Psb30/Ycf12, at least 3 peripheral proteins of the oxygen-evolving complex and a large number of cofactors. It forms dimeric complexes.

The protein resides in the plastid. Its subcellular location is the chloroplast thylakoid membrane. One of the components of the core complex of photosystem II (PSII). PSII is a light-driven water:plastoquinone oxidoreductase that uses light energy to abstract electrons from H(2)O, generating O(2) and a proton gradient subsequently used for ATP formation. It consists of a core antenna complex that captures photons, and an electron transfer chain that converts photonic excitation into a charge separation. This subunit is found at the monomer-monomer interface and is required for correct PSII assembly and/or dimerization. This chain is Photosystem II reaction center protein L, found in Rhodomonas salina (Cryptomonas salina).